We begin with the raw amino-acid sequence, 405 residues long: Formin-like protein 15a (405 aa).

The tract at residues 1-31 (MSLVEISGSDAMAAPMPGRVPPPPPRPPPMP) is disordered. Residues 18-31 (GRVPPPPPRPPPMP) show a composition bias toward pro residues. Residues 52 to 405 (FPRPAKKRAS…VCWFFVRLMI (354 aa)) enclose the FH2 domain.

Belongs to the formin-like family. Class-II subfamily.

The sequence is that of Formin-like protein 15a (FH15A) from Arabidopsis thaliana (Mouse-ear cress).